The primary structure comprises 298 residues: Acetylglutamate kinase (298 aa).

Substrate is bound by residues 69–70 (GG), arginine 91, and asparagine 196.

The protein belongs to the acetylglutamate kinase family. ArgB subfamily.

It localises to the cytoplasm. The enzyme catalyses N-acetyl-L-glutamate + ATP = N-acetyl-L-glutamyl 5-phosphate + ADP. The protein operates within amino-acid biosynthesis; L-arginine biosynthesis; N(2)-acetyl-L-ornithine from L-glutamate: step 2/4. Catalyzes the ATP-dependent phosphorylation of N-acetyl-L-glutamate. The sequence is that of Acetylglutamate kinase from Rhodopseudomonas palustris (strain TIE-1).